The primary structure comprises 181 residues: Probable GTP-binding protein EngB (181 aa).

An EngB-type G domain is found at 18-181 (PKNEICFVGR…LQDLVNNLFN (164 aa)). GTP is bound by residues 26-33 (GRSNVGKS), 52-56 (GKTKL), 70-73 (DLPG), 137-140 (TKRD), and 164-166 (VSI). The Mg(2+) site is built by Ser33 and Thr54.

Belongs to the TRAFAC class TrmE-Era-EngA-EngB-Septin-like GTPase superfamily. EngB GTPase family. The cofactor is Mg(2+).

In terms of biological role, necessary for normal cell division and for the maintenance of normal septation. In Mycoplasma mobile (strain ATCC 43663 / 163K / NCTC 11711) (Mesomycoplasma mobile), this protein is Probable GTP-binding protein EngB.